We begin with the raw amino-acid sequence, 76 residues long: Sec-independent protein translocase protein TatA (76 aa).

Residues Met-1–Gly-21 form a helical membrane-spanning segment. Residues Asn-47 to Ser-76 form a disordered region. Residues Ile-66–Ser-76 show a composition bias toward basic and acidic residues.

The protein belongs to the TatA/E family. The Tat system comprises two distinct complexes: a TatABC complex, containing multiple copies of TatA, TatB and TatC subunits, and a separate TatA complex, containing only TatA subunits. Substrates initially bind to the TatABC complex, which probably triggers association of the separate TatA complex to form the active translocon.

The protein localises to the cell inner membrane. Functionally, part of the twin-arginine translocation (Tat) system that transports large folded proteins containing a characteristic twin-arginine motif in their signal peptide across membranes. TatA could form the protein-conducting channel of the Tat system. The protein is Sec-independent protein translocase protein TatA of Dechloromonas aromatica (strain RCB).